The following is a 322-amino-acid chain: Prephenate dehydratase (322 aa).

Positions 5-191 constitute a Prephenate dehydratase domain; that stretch reads RIAYLGPEGT…ARTRFVLVGM (187 aa). In terms of domain architecture, ACT spans 205-282; the sequence is SAVLRIDNAP…ADVCYLGSWP (78 aa). The segment at 286 to 322 is disordered; that stretch reads ATGPTVSPPPPDEASRWLARLRAGKPDQASEPGGGKL.

Homodimer.

It carries out the reaction prephenate + H(+) = 3-phenylpyruvate + CO2 + H2O. It functions in the pathway amino-acid biosynthesis; L-phenylalanine biosynthesis; phenylpyruvate from prephenate: step 1/1. The sequence is that of Prephenate dehydratase (pheA) from Mycobacterium leprae (strain Br4923).